A 189-amino-acid chain; its full sequence is Bilin-binding protein (189 aa).

An N-terminal signal peptide occupies residues 1–15; sequence MQYLIVLALVAAASA. Disulfide bonds link Cys-23/Cys-130 and Cys-57/Cys-185.

This sequence belongs to the calycin superfamily. Lipocalin family. As to quaternary structure, homotetramer. Hemolymph.

Its subcellular location is the secreted. This protein binds the blue pigments bilins. The sequence is that of Bilin-binding protein from Pieris brassicae (White butterfly).